The chain runs to 265 residues: Mlc titration factor A (265 aa).

Zn(2+) contacts are provided by histidine 111, histidine 148, histidine 152, and glutamate 211.

This sequence belongs to the MtfA family. In terms of assembly, interacts with Mlc. The cofactor is Zn(2+).

It localises to the cytoplasm. Functionally, involved in the modulation of the activity of the glucose-phosphotransferase system (glucose-PTS). Interacts with the transcriptional repressor Mlc, preventing its interaction with DNA and leading to the modulation of expression of genes regulated by Mlc, including ptsG, which encodes the PTS system glucose-specific EIICB component. Its function is as follows. Shows zinc-dependent metallopeptidase activity. The protein is Mlc titration factor A of Escherichia fergusonii (strain ATCC 35469 / DSM 13698 / CCUG 18766 / IAM 14443 / JCM 21226 / LMG 7866 / NBRC 102419 / NCTC 12128 / CDC 0568-73).